Here is a 717-residue protein sequence, read N- to C-terminus: Probable E3 ubiquitin-protein ligase WAVH2 (717 aa).

Composition is skewed to polar residues over residues 13 to 28 (VSSNQDKPQQHSSLHT) and 85 to 94 (RTTSNATPRT). The disordered stretch occupies residues 13 to 120 (VSSNQDKPQQ…SSSSSSSQGG (108 aa)). Positions 95–117 (SNSSSPKFFSNPSSPKSSSSSSS) are enriched in low complexity. An RING-type; atypical zinc finger spans residues 140–184 (CAICLQRVNSNQSNSTAAIFTAECSHSFHLSCVNGLEDKRCPFCS). One can recognise a VWFA domain in the interval 326–456 (DLVTVLDLSN…LNATRIPFVV (131 aa)).

Expressed in root tips, cotyledons, leaf primordia and hypocotyls.

It catalyses the reaction S-ubiquitinyl-[E2 ubiquitin-conjugating enzyme]-L-cysteine + [acceptor protein]-L-lysine = [E2 ubiquitin-conjugating enzyme]-L-cysteine + N(6)-ubiquitinyl-[acceptor protein]-L-lysine.. Probable E3 ubiquitin-protein ligase involved in the regulation of root growth. Acts as a positive regulator of root gravitropism. This Arabidopsis thaliana (Mouse-ear cress) protein is Probable E3 ubiquitin-protein ligase WAVH2.